Reading from the N-terminus, the 118-residue chain is NADPH-dependent 7-cyano-7-deazaguanine reductase (118 aa).

The active-site Thioimide intermediate is Cys-34. Asp-41 (proton donor) is an active-site residue. Substrate is bound by residues 56 to 58 (VEL) and 75 to 76 (HE).

It belongs to the GTP cyclohydrolase I family. QueF type 1 subfamily.

Its subcellular location is the cytoplasm. It carries out the reaction 7-aminomethyl-7-carbaguanine + 2 NADP(+) = 7-cyano-7-deazaguanine + 2 NADPH + 3 H(+). It functions in the pathway tRNA modification; tRNA-queuosine biosynthesis. Catalyzes the NADPH-dependent reduction of 7-cyano-7-deazaguanine (preQ0) to 7-aminomethyl-7-deazaguanine (preQ1). The polypeptide is NADPH-dependent 7-cyano-7-deazaguanine reductase (Halorhodospira halophila (strain DSM 244 / SL1) (Ectothiorhodospira halophila (strain DSM 244 / SL1))).